The primary structure comprises 398 residues: Cap-specific mRNA (nucleoside-2'-O-)-methyltransferase 1 (398 aa).

The RrmJ-type SAM-dependent 2'-O-MTase domain maps to 85 to 298 (QFSNRAGHKL…ERYLVCVDFL (214 aa)). S-adenosyl-L-methionine-binding residues include G132 and D211. Residue K252 is the Proton acceptor of the active site. The segment at 371 to 398 (LKAKETTTRTSAESDDSPLSSRESCKDG) is disordered.

It catalyses the reaction a 5'-end (N(7)-methyl 5'-triphosphoguanosine)-ribonucleoside in mRNA + S-adenosyl-L-methionine = a 5'-end (N(7)-methyl 5'-triphosphoguanosine)-(2'-O-methyl-ribonucleoside) in mRNA + S-adenosyl-L-homocysteine + H(+). In terms of biological role, S-adenosyl-L-methionine-dependent methyltransferase that mediates RNA cap1 2'-O-ribose methylation to the 5'-cap structure of RNAs. Methylates the ribose of the first nucleotide of a m(7)GpppG-capped mRNA to produce m(7)GpppNmp (cap1). This is Cap-specific mRNA (nucleoside-2'-O-)-methyltransferase 1 from Leishmania braziliensis.